Consider the following 155-residue polypeptide: U4/U6.U5 small nuclear ribonucleoprotein 27 kDa protein (155 aa).

Basic residues-rich tracts occupy residues 1–31 (MGRS…RERS) and 39–59 (RRSR…RHRS). The disordered stretch occupies residues 1-97 (MGRSRSRSPR…ITEEDLEGKT (97 aa)). Ser61 and Ser65 each carry phosphoserine. Basic and acidic residues predominate over residues 66-97 (RLKERRDEEKKETKETKSKERQITEEDLEGKT). Phosphoserine occurs at positions 111, 114, and 132.

It belongs to the SNUT3 family. Part of a tri-snRNP complex. Post-translationally, phosphorylated in vitro by snRNP-associated protein kinase.

The protein resides in the nucleus. In terms of biological role, may play a role in mRNA splicing. The sequence is that of U4/U6.U5 small nuclear ribonucleoprotein 27 kDa protein (SNRNP27) from Homo sapiens (Human).